Consider the following 167-residue polypeptide: Ion-translocating oxidoreductase complex subunit B (167 aa).

The tract at residues 1 to 22 is hydrophobic; sequence MITLIIFSFLSFLLGIILSFTA. Residues 28–87 form the 4Fe-4S domain; it reads QEDPIVEIVNELLPQSQCAQCGYSGCYPYAKAIVENSEKINKCIPGGTDLISAISSVLSI. Residues C45, C48, C53, C70, C113, C116, C119, C123, C143, C146, C149, and C153 each coordinate [4Fe-4S] cluster. 2 consecutive 4Fe-4S ferredoxin-type domains span residues 104 to 133 and 134 to 163; these read NTVL…GAPN and FIHT…IKKE.

The protein belongs to the 4Fe4S bacterial-type ferredoxin family. RnfB subfamily. In terms of assembly, the complex is composed of six subunits: RnfA, RnfB, RnfC, RnfD, RnfE and RnfG. The cofactor is [4Fe-4S] cluster.

It localises to the cell inner membrane. Its function is as follows. Part of a membrane-bound complex that couples electron transfer with translocation of ions across the membrane. This Buchnera aphidicola subsp. Acyrthosiphon pisum (strain Tuc7) protein is Ion-translocating oxidoreductase complex subunit B.